Here is a 308-residue protein sequence, read N- to C-terminus: 1D-myo-inositol 2-acetamido-2-deoxy-alpha-D-glucopyranoside deacetylase (308 aa).

Residues His-37, Asp-40, and His-171 each contribute to the Zn(2+) site.

The protein belongs to the MshB deacetylase family. It depends on Zn(2+) as a cofactor.

It catalyses the reaction 1D-myo-inositol 2-acetamido-2-deoxy-alpha-D-glucopyranoside + H2O = 1D-myo-inositol 2-amino-2-deoxy-alpha-D-glucopyranoside + acetate. Functionally, catalyzes the deacetylation of 1D-myo-inositol 2-acetamido-2-deoxy-alpha-D-glucopyranoside (GlcNAc-Ins) in the mycothiol biosynthesis pathway. This chain is 1D-myo-inositol 2-acetamido-2-deoxy-alpha-D-glucopyranoside deacetylase, found in Mycobacterium sp. (strain JLS).